The primary structure comprises 147 residues: Large ribosomal subunit protein uL13 (147 aa).

It belongs to the universal ribosomal protein uL13 family. Part of the 50S ribosomal subunit.

Functionally, this protein is one of the early assembly proteins of the 50S ribosomal subunit, although it is not seen to bind rRNA by itself. It is important during the early stages of 50S assembly. The chain is Large ribosomal subunit protein uL13 from Streptomyces avermitilis (strain ATCC 31267 / DSM 46492 / JCM 5070 / NBRC 14893 / NCIMB 12804 / NRRL 8165 / MA-4680).